The sequence spans 383 residues: MAIRIKSTRVGRFVSESVGLGHPDKICDQIADSILDQCLLQSKTSHVACEVFASKNLILIGGEISTSGYVDVVQTAWRILRNLGYNETDFSFLSCINNQSLEINQAVLKNNEINAGDQGITVGYAVNETKQLMPLGVLLAHSFLKQAEKLTKQFDFLKNDMKSQVVLNYSLNQVECEEVLLSIQHTNAISLTELRKVIENNVILPVLNQYGFQDKKPTCLVNPGGSFVLGGPMADTGLTGRKIIVDTYGPYAHHGGGSFSGKDPSKVDRTGAYFARFIAKHIVSLGWASECEVSISWVFSKPNPQSITVKCFNTNIQYDEVLINRVVNNYFNWSITKIIDKLKLLDFVKYSDYAVYGHFGNDLSPWEQPTELDKLECLIKNFH.

An ATP-binding site is contributed by His22. Asp24 serves as a coordination point for Mg(2+). Glu50 is a K(+) binding site. 2 residues coordinate L-methionine: Glu63 and Gln99. Residues 99–109 are flexible loop; it reads QSLEINQAVLK. ATP is bound by residues 160–162, Asp235, 241–242, Ser258, and Lys262; these read DMK and RK. Asp235 is a binding site for L-methionine. Position 266 (Lys266) interacts with L-methionine.

It belongs to the AdoMet synthase family. Homotetramer; dimer of dimers. Requires Mg(2+) as cofactor. K(+) is required as a cofactor.

The protein localises to the cytoplasm. It carries out the reaction L-methionine + ATP + H2O = S-adenosyl-L-methionine + phosphate + diphosphate. It participates in amino-acid biosynthesis; S-adenosyl-L-methionine biosynthesis; S-adenosyl-L-methionine from L-methionine: step 1/1. Functionally, catalyzes the formation of S-adenosylmethionine (AdoMet) from methionine and ATP. The overall synthetic reaction is composed of two sequential steps, AdoMet formation and the subsequent tripolyphosphate hydrolysis which occurs prior to release of AdoMet from the enzyme. The protein is S-adenosylmethionine synthase of Mycoplasma genitalium (strain ATCC 33530 / DSM 19775 / NCTC 10195 / G37) (Mycoplasmoides genitalium).